The primary structure comprises 893 residues: TBC domain-containing protein kinase-like protein (893 aa).

The Protein kinase domain occupies Met-1–Phe-273. Residues Asp-466–Asn-651 form the Rab-GAP TBC domain.

It belongs to the protein kinase superfamily. In terms of assembly, component of the FERRY complex composed of five subunits, TBCK, PPP1R21, FERRY3, CRYZL1 and GATD1 with a ratio of 1:2:1:2:4, respectively.

It is found in the cytoplasm. Its subcellular location is the cytoskeleton. The protein localises to the spindle. The protein resides in the midbody. It localises to the early endosome. Component of the FERRY complex (Five-subunit Endosomal Rab5 and RNA/ribosome intermediary). The FERRY complex directly interacts with mRNAs and RAB5A, and functions as a RAB5A effector involved in the localization and the distribution of specific mRNAs most likely by mediating their endosomal transport. The complex recruits mRNAs and ribosomes to early endosomes through direct mRNA-interaction. Also involved in the modulation of mTOR signaling and expression of mTOR complex components. Involved in the control of actin-cytoskeleton organization. The polypeptide is TBC domain-containing protein kinase-like protein (Tbck) (Mus musculus (Mouse)).